Reading from the N-terminus, the 391-residue chain is Putative penicillin-binding protein PbpX (391 aa).

A helical transmembrane segment spans residues 21 to 40 (GKLLFGLLAVMVCITIWNAL). The disordered stretch occupies residues 44 to 76 (SEENEPSQETAAVSNTDQKKEVKKKTAKKSEEQ). Residues 50–59 (SQETAAVSNT) show a composition bias toward polar residues.

Belongs to the beta-lactamase family.

It localises to the cell membrane. The sequence is that of Putative penicillin-binding protein PbpX (pbpX) from Bacillus subtilis (strain 168).